We begin with the raw amino-acid sequence, 63 residues long: Putative antitoxin AF_1084 (63 aa).

This sequence belongs to the UPF0165 family.

In terms of biological role, possibly the antitoxin component of a type II toxin-antitoxin (TA) system. This Archaeoglobus fulgidus (strain ATCC 49558 / DSM 4304 / JCM 9628 / NBRC 100126 / VC-16) protein is Putative antitoxin AF_1084.